A 352-amino-acid polypeptide reads, in one-letter code: Glycerol-1-phosphate dehydrogenase [NAD(P)+] (352 aa).

NAD(+) contacts are provided by residues 98–102 (GKAID) and 120–123 (TAAS). Aspartate 125 serves as a coordination point for substrate. Serine 129 provides a ligand contact to NAD(+). Aspartate 172 serves as a coordination point for substrate. Zn(2+) contacts are provided by aspartate 172 and histidine 252. Residue histidine 256 participates in substrate binding. Residue histidine 268 coordinates Zn(2+).

The protein belongs to the glycerol-1-phosphate dehydrogenase family. Zn(2+) is required as a cofactor.

Its subcellular location is the cytoplasm. The enzyme catalyses sn-glycerol 1-phosphate + NAD(+) = dihydroxyacetone phosphate + NADH + H(+). It carries out the reaction sn-glycerol 1-phosphate + NADP(+) = dihydroxyacetone phosphate + NADPH + H(+). It participates in membrane lipid metabolism; glycerophospholipid metabolism. Functionally, catalyzes the NAD(P)H-dependent reduction of dihydroxyacetonephosphate (DHAP or glycerone phosphate) to glycerol 1-phosphate (G1P). The G1P thus generated is used as the glycerophosphate backbone of phospholipids in the cellular membranes of Archaea. The protein is Glycerol-1-phosphate dehydrogenase [NAD(P)+] of Haloarcula marismortui (strain ATCC 43049 / DSM 3752 / JCM 8966 / VKM B-1809) (Halobacterium marismortui).